The following is a 184-amino-acid chain: ATP synthase subunit b, chloroplastic (184 aa).

Residues 27 to 49 (LATNPINLSVVFGVLIFFGKGVL) form a helical membrane-spanning segment.

It belongs to the ATPase B chain family. In terms of assembly, F-type ATPases have 2 components, F(1) - the catalytic core - and F(0) - the membrane proton channel. F(1) has five subunits: alpha(3), beta(3), gamma(1), delta(1), epsilon(1). F(0) has four main subunits: a(1), b(1), b'(1) and c(10-14). The alpha and beta chains form an alternating ring which encloses part of the gamma chain. F(1) is attached to F(0) by a central stalk formed by the gamma and epsilon chains, while a peripheral stalk is formed by the delta, b and b' chains.

It localises to the plastid. Its subcellular location is the chloroplast thylakoid membrane. F(1)F(0) ATP synthase produces ATP from ADP in the presence of a proton or sodium gradient. F-type ATPases consist of two structural domains, F(1) containing the extramembraneous catalytic core and F(0) containing the membrane proton channel, linked together by a central stalk and a peripheral stalk. During catalysis, ATP synthesis in the catalytic domain of F(1) is coupled via a rotary mechanism of the central stalk subunits to proton translocation. Its function is as follows. Component of the F(0) channel, it forms part of the peripheral stalk, linking F(1) to F(0). In Draba nemorosa (Woodland whitlowgrass), this protein is ATP synthase subunit b, chloroplastic.